We begin with the raw amino-acid sequence, 288 residues long: Bifunctional protein FolD (288 aa).

NADP(+) contacts are provided by residues 166-168 (GAS) and Ile232.

Belongs to the tetrahydrofolate dehydrogenase/cyclohydrolase family. In terms of assembly, homodimer.

It catalyses the reaction (6R)-5,10-methylene-5,6,7,8-tetrahydrofolate + NADP(+) = (6R)-5,10-methenyltetrahydrofolate + NADPH. The enzyme catalyses (6R)-5,10-methenyltetrahydrofolate + H2O = (6R)-10-formyltetrahydrofolate + H(+). It participates in one-carbon metabolism; tetrahydrofolate interconversion. Functionally, catalyzes the oxidation of 5,10-methylenetetrahydrofolate to 5,10-methenyltetrahydrofolate and then the hydrolysis of 5,10-methenyltetrahydrofolate to 10-formyltetrahydrofolate. The polypeptide is Bifunctional protein FolD (Cronobacter sakazakii (strain ATCC BAA-894) (Enterobacter sakazakii)).